Consider the following 312-residue polypeptide: Lipoyl synthase (312 aa).

The segment covering 1-10 has biased composition (basic and acidic residues); that stretch reads MNEAPAEKQK. The tract at residues 1–20 is disordered; it reads MNEAPAEKQKPQQGKRFSER. C51, C56, C62, C77, C81, C84, and S290 together coordinate [4Fe-4S] cluster. The Radical SAM core domain occupies 63 to 280; it reads WSRKTATYLA…RSVGESLGLF (218 aa).

This sequence belongs to the radical SAM superfamily. Lipoyl synthase family. Requires [4Fe-4S] cluster as cofactor.

Its subcellular location is the cytoplasm. It catalyses the reaction [[Fe-S] cluster scaffold protein carrying a second [4Fe-4S](2+) cluster] + N(6)-octanoyl-L-lysyl-[protein] + 2 oxidized [2Fe-2S]-[ferredoxin] + 2 S-adenosyl-L-methionine + 4 H(+) = [[Fe-S] cluster scaffold protein] + N(6)-[(R)-dihydrolipoyl]-L-lysyl-[protein] + 4 Fe(3+) + 2 hydrogen sulfide + 2 5'-deoxyadenosine + 2 L-methionine + 2 reduced [2Fe-2S]-[ferredoxin]. It functions in the pathway protein modification; protein lipoylation via endogenous pathway; protein N(6)-(lipoyl)lysine from octanoyl-[acyl-carrier-protein]: step 2/2. Its function is as follows. Catalyzes the radical-mediated insertion of two sulfur atoms into the C-6 and C-8 positions of the octanoyl moiety bound to the lipoyl domains of lipoate-dependent enzymes, thereby converting the octanoylated domains into lipoylated derivatives. In Chlamydia felis (strain Fe/C-56) (Chlamydophila felis), this protein is Lipoyl synthase.